The chain runs to 444 residues: 3-phosphoshikimate 1-carboxyvinyltransferase (444 aa).

Lysine 32, serine 33, and arginine 37 together coordinate 3-phosphoshikimate. A phosphoenolpyruvate-binding site is contributed by lysine 32. Phosphoenolpyruvate contacts are provided by glycine 105 and arginine 133. Serine 178, glutamine 180, aspartate 326, and lysine 353 together coordinate 3-phosphoshikimate. Glutamine 180 is a phosphoenolpyruvate binding site. Aspartate 326 acts as the Proton acceptor in catalysis. The phosphoenolpyruvate site is built by arginine 357 and arginine 398.

This sequence belongs to the EPSP synthase family. As to quaternary structure, monomer.

The protein localises to the cytoplasm. The catalysed reaction is 3-phosphoshikimate + phosphoenolpyruvate = 5-O-(1-carboxyvinyl)-3-phosphoshikimate + phosphate. It functions in the pathway metabolic intermediate biosynthesis; chorismate biosynthesis; chorismate from D-erythrose 4-phosphate and phosphoenolpyruvate: step 6/7. Functionally, catalyzes the transfer of the enolpyruvyl moiety of phosphoenolpyruvate (PEP) to the 5-hydroxyl of shikimate-3-phosphate (S3P) to produce enolpyruvyl shikimate-3-phosphate and inorganic phosphate. The protein is 3-phosphoshikimate 1-carboxyvinyltransferase of Nitrosococcus oceani (strain ATCC 19707 / BCRC 17464 / JCM 30415 / NCIMB 11848 / C-107).